Consider the following 346-residue polypeptide: Dimethyladenosine transferase 1, mitochondrial (346 aa).

The transit peptide at 1–27 directs the protein to the mitochondrion; it reads MAASGKLSTCRLPPLPTIREIIKLLRL. S-adenosyl-L-methionine is bound by residues L38, G63, E85, K86, D111, V112, and N141.

This sequence belongs to the class I-like SAM-binding methyltransferase superfamily. rRNA adenine N(6)-methyltransferase family. KsgA subfamily. As to quaternary structure, interacts with mitochondrial RNA polymerase POLRMT. Interacts with TFAM. Bound to the maturing mtSSU until the late stages of assembly. As to expression, ubiquitously expressed.

It localises to the mitochondrion. The enzyme catalyses adenosine(N)/adenosine(N+1) in rRNA + 4 S-adenosyl-L-methionine = N(6)-dimethyladenosine(N)/N(6)-dimethyladenosine(N+1) in rRNA + 4 S-adenosyl-L-homocysteine + 4 H(+). Mitochondrial methyltransferase which uses S-adenosyl methionine to dimethylate two highly conserved adjacent adenosine residues (A1583 and A1584) within the loop of helix 45 at the 3-prime end of 12S rRNA, thereby regulating the assembly or stability of the small subunit of the mitochondrial ribosome. Also required for basal transcription of mitochondrial DNA, probably via its interaction with POLRMT and TFAM. Stimulates transcription independently of the methyltransferase activity. This Homo sapiens (Human) protein is Dimethyladenosine transferase 1, mitochondrial.